The primary structure comprises 116 residues: Nucleoid-associated protein A9601_00191 (116 aa).

This sequence belongs to the YbaB/EbfC family. Homodimer.

Its subcellular location is the cytoplasm. The protein resides in the nucleoid. In terms of biological role, binds to DNA and alters its conformation. May be involved in regulation of gene expression, nucleoid organization and DNA protection. The chain is Nucleoid-associated protein A9601_00191 from Prochlorococcus marinus (strain AS9601).